Consider the following 499-residue polypeptide: MSIIDTRTPDSKHFISGVTGDWEVIIGMEVHAQIISNSKLFSGASAKFGAEPNNHVSLIDAAMPGMLPVLNEECVRQAVRTGLGLKARINLKSVFDRKNYFYPDLPQGYQISQFHYPIVGEGKIIISVGPDSNGQFEDIEVGIERLHLEQDAGKSMHDQHPTMSFVDLNRSGVALMEIVSKPDMRSSDEAKAYMTKLRTIVRYLGTCDGNMDEGSMRADVNVSVRRPGEDFGTRCEIKNVNSIRFIGQAIEYEARRQIAILEDGGVIEQETRLFDATKGETRSMRSKEEAHDYRYFPDPDLLPLEFDQAFVDSLAADLPELPDAIKARFVKEMGLTVYDASILVTEKAIADYFEEVAYGRDGKIVANWVINDLLGALNKDNREIEESPVSPNQLGSIIDLIKEGTISGKIAKDLFEIVWNEGGDPRQIVEERSMKQVTDTKAIERAVDEIVANNADKVAQAKQKPALAGWFVGQVMKATGGKANPQTVNELVKMKLGID.

This sequence belongs to the GatB/GatE family. GatB subfamily. As to quaternary structure, heterotrimer of A, B and C subunits.

The enzyme catalyses L-glutamyl-tRNA(Gln) + L-glutamine + ATP + H2O = L-glutaminyl-tRNA(Gln) + L-glutamate + ADP + phosphate + H(+). The catalysed reaction is L-aspartyl-tRNA(Asn) + L-glutamine + ATP + H2O = L-asparaginyl-tRNA(Asn) + L-glutamate + ADP + phosphate + 2 H(+). Functionally, allows the formation of correctly charged Asn-tRNA(Asn) or Gln-tRNA(Gln) through the transamidation of misacylated Asp-tRNA(Asn) or Glu-tRNA(Gln) in organisms which lack either or both of asparaginyl-tRNA or glutaminyl-tRNA synthetases. The reaction takes place in the presence of glutamine and ATP through an activated phospho-Asp-tRNA(Asn) or phospho-Glu-tRNA(Gln). The protein is Aspartyl/glutamyl-tRNA(Asn/Gln) amidotransferase subunit B of Bartonella tribocorum (strain CIP 105476 / IBS 506).